The chain runs to 750 residues: Ribosomal RNA large subunit methyltransferase K/L (750 aa).

Residues 46–157 (TAYRLCLWSR…RGEAILSLDL (112 aa)) form the THUMP domain.

It belongs to the methyltransferase superfamily. RlmKL family.

Its subcellular location is the cytoplasm. It carries out the reaction guanosine(2445) in 23S rRNA + S-adenosyl-L-methionine = N(2)-methylguanosine(2445) in 23S rRNA + S-adenosyl-L-homocysteine + H(+). It catalyses the reaction guanosine(2069) in 23S rRNA + S-adenosyl-L-methionine = N(2)-methylguanosine(2069) in 23S rRNA + S-adenosyl-L-homocysteine + H(+). Its function is as follows. Specifically methylates the guanine in position 2445 (m2G2445) and the guanine in position 2069 (m7G2069) of 23S rRNA. The protein is Ribosomal RNA large subunit methyltransferase K/L of Pseudomonas syringae pv. tomato (strain ATCC BAA-871 / DC3000).